The sequence spans 403 residues: Solanesyl-diphosphate synthase 2, chloroplastic (403 aa).

The N-terminal 62 residues, 1-62, are a transit peptide targeting the chloroplast; sequence MLSVSCPRVY…QPGLAAVDVP (62 aa). Residues Lys-123, Arg-126, and His-161 each coordinate isopentenyl diphosphate. 2 residues coordinate Mg(2+): Asp-168 and Asp-172. An an all-trans-polyprenyl diphosphate-binding site is contributed by Arg-177. Position 178 (Arg-178) interacts with isopentenyl diphosphate. An all-trans-polyprenyl diphosphate-binding residues include Lys-254, Thr-255, Gln-292, and Lys-309.

This sequence belongs to the FPP/GGPP synthase family. Homodimer. Interacts with FBN5. Requires Mg(2+) as cofactor. In terms of tissue distribution, expressed in leaves, stems and roots. Highest expression in leaves and roots.

It is found in the plastid. The protein resides in the chloroplast. The enzyme catalyses 7 isopentenyl diphosphate + (2E)-geranyl diphosphate = all-trans-nonaprenyl diphosphate + 7 diphosphate. Its function is as follows. Involved in providing solanesyl diphosphate for plastoquinone-9 (PQ-9) formation. Geranyl diphosphate is the preferred substrate. The sequence is that of Solanesyl-diphosphate synthase 2, chloroplastic from Oryza sativa subsp. japonica (Rice).